Here is a 243-residue protein sequence, read N- to C-terminus: MAGAHSNPSWSRHLFKAVLMVLGALLLVHSASAQTHREFASPGQQKRESSADILTEIGRSLKETLDTWLGPETMHVISETLLQVMWAISSAISVACFALSGIAAQLLSALGLDGEQLTQVLKLSPSQVQTLLLWGAAALVIYWLLSLLLGLVLALLGRILGGLKLVLFVAGFVGLVRSVPDPSTRALLLLALLTVFALLSRLTGSRSSGTHLEAKVRGLERQIEELRGRQRRAAKIPRSMEEE.

An N-terminal signal peptide occupies residues Met-1 to Ala-33. Residues Gln-34–Gln-83 lie on the Lumenal side of the membrane. The helical transmembrane segment at Val-84 to Ala-104 threads the bilayer. Topologically, residues Gln-105–Gly-135 are cytoplasmic. Residues Ala-136–Leu-156 traverse the membrane as a helical segment. At Gly-157 to Arg-185 the chain is on the lumenal side. A helical membrane pass occupies residues Ala-186–Ser-205. The Cytoplasmic portion of the chain corresponds to Arg-206 to Glu-243.

As to quaternary structure, homooligomer. Interacts with CRYAB; in the cellular response to DNA damage.

It localises to the nucleus outer membrane. Its subcellular location is the endoplasmic reticulum membrane. The protein localises to the sarcoplasmic reticulum membrane. It carries out the reaction K(+)(in) = K(+)(out). The catalysed reaction is Ca(2+)(in) = Ca(2+)(out). Functions as a voltage-gated monoatomic cation channel permeable to both potassium and calcium. Plays a role in the cellular response to DNA damage. The chain is Voltage-gated monoatomic cation channel TMEM109 from Rattus norvegicus (Rat).